A 313-amino-acid polypeptide reads, in one-letter code: Ornithine carbamoyltransferase (313 aa).

Carbamoyl phosphate contacts are provided by residues 57 to 60 (STRT), arginine 108, and 135 to 138 (HPTQ). Residues asparagine 167, aspartate 231, and 235 to 236 (SM) contribute to the L-ornithine site. Residues 272–273 (CL) and arginine 300 contribute to the carbamoyl phosphate site.

Belongs to the aspartate/ornithine carbamoyltransferase superfamily. OTCase family.

The protein resides in the cytoplasm. It carries out the reaction carbamoyl phosphate + L-ornithine = L-citrulline + phosphate + H(+). The protein operates within amino-acid biosynthesis; L-arginine biosynthesis; L-arginine from L-ornithine and carbamoyl phosphate: step 1/3. Its function is as follows. Reversibly catalyzes the transfer of the carbamoyl group from carbamoyl phosphate (CP) to the N(epsilon) atom of ornithine (ORN) to produce L-citrulline. The sequence is that of Ornithine carbamoyltransferase from Thermotoga petrophila (strain ATCC BAA-488 / DSM 13995 / JCM 10881 / RKU-1).